Consider the following 194-residue polypeptide: Peptidyl-tRNA hydrolase (194 aa).

Tyr-17 contacts tRNA. His-22 serves as the catalytic Proton acceptor. TRNA-binding residues include Tyr-68, Asn-70, and Asn-116.

Belongs to the PTH family. As to quaternary structure, monomer.

The protein resides in the cytoplasm. The catalysed reaction is an N-acyl-L-alpha-aminoacyl-tRNA + H2O = an N-acyl-L-amino acid + a tRNA + H(+). Functionally, hydrolyzes ribosome-free peptidyl-tRNAs (with 1 or more amino acids incorporated), which drop off the ribosome during protein synthesis, or as a result of ribosome stalling. In terms of biological role, catalyzes the release of premature peptidyl moieties from peptidyl-tRNA molecules trapped in stalled 50S ribosomal subunits, and thus maintains levels of free tRNAs and 50S ribosomes. The polypeptide is Peptidyl-tRNA hydrolase (Pseudomonas putida (strain GB-1)).